We begin with the raw amino-acid sequence, 506 residues long: Maturase K (506 aa).

This sequence belongs to the intron maturase 2 family. MatK subfamily.

It is found in the plastid. It localises to the chloroplast. Its function is as follows. Usually encoded in the trnK tRNA gene intron. Probably assists in splicing its own and other chloroplast group II introns. This Trifolium hirtum (Rose clover) protein is Maturase K.